Consider the following 360-residue polypeptide: MTTALQRRESASLWQQFCEWVTSTDNRLYVGWFGVLMIPTLLTATICFIVAFIAAPPVDIDGIREPVAGSLMYGNNIISGAVVPSSNAIGLHFYPIWEAASLDEWLYNGGPYQLVVFHFLIGVFCYMGREWELSYRLGMRPWICVAYSAPVAAATAVFLIYPIGQGSFSDGMPLGISGTFNFMFVFQAEHNILMHPFHMLGVAGVFGGSLFSAMHGSLVTSSLVRETTETESQNYGYKFGQEEETYNIVAAHGYFGRLIFQYASFNNSRSLHFFLAAWPVVGIWFTSLGISTMAFNLNGFNFNQSVLDSQGRVINTWADVLNRANLGMEVMHERNAHNFPLDLAAGEATPVALTAPAING.

The next 3 membrane-spanning stretches (helical) occupy residues 29-46 (YVGWFGVLMIPTLLTATI), 118-133 (HFLIGVFCYMGREWEL), and 142-156 (WICVAYSAPVAAATA). His118 serves as a coordination point for chlorophyll a. Tyr126 is a binding site for pheophytin a. Residues Asp170 and Glu189 each contribute to the [CaMn4O5] cluster site. The helical transmembrane segment at 197 to 218 (FHMLGVAGVFGGSLFSAMHGSL) threads the bilayer. His198 contributes to the chlorophyll a binding site. Residues His215 and 264–265 (SF) each bind a quinone. His215 is a Fe cation binding site. His272 is a Fe cation binding site. The helical transmembrane segment at 274–288 (FLAAWPVVGIWFTSL) threads the bilayer. Residues His332, Glu333, Asp342, and Ala344 each contribute to the [CaMn4O5] cluster site. The propeptide occupies 345–360 (AGEATPVALTAPAING).

This sequence belongs to the reaction center PufL/M/PsbA/D family. PSII is composed of 1 copy each of membrane proteins PsbA, PsbB, PsbC, PsbD, PsbE, PsbF, PsbH, PsbI, PsbJ, PsbK, PsbL, PsbM, PsbT, PsbX, PsbY, PsbZ, Psb30/Ycf12, peripheral proteins PsbO, CyanoQ (PsbQ), PsbU, PsbV and a large number of cofactors. It forms dimeric complexes. The D1/D2 heterodimer binds P680, chlorophylls that are the primary electron donor of PSII, and subsequent electron acceptors. It shares a non-heme iron and each subunit binds pheophytin, quinone, additional chlorophylls, carotenoids and lipids. D1 provides most of the ligands for the Mn4-Ca-O5 cluster of the oxygen-evolving complex (OEC). There is also a Cl(-1) ion associated with D1 and D2, which is required for oxygen evolution. The PSII complex binds additional chlorophylls, carotenoids and specific lipids. serves as cofactor. Post-translationally, tyr-161 forms a radical intermediate that is referred to as redox-active TyrZ, YZ or Y-Z. C-terminally processed by CtpA; processing is essential to allow assembly of the oxygen-evolving complex and thus photosynthetic growth.

The protein localises to the cellular thylakoid membrane. It catalyses the reaction 2 a plastoquinone + 4 hnu + 2 H2O = 2 a plastoquinol + O2. In terms of biological role, photosystem II (PSII) is a light-driven water:plastoquinone oxidoreductase that uses light energy to abstract electrons from H(2)O, generating O(2) and a proton gradient subsequently used for ATP formation. It consists of a core antenna complex that captures photons, and an electron transfer chain that converts photonic excitation into a charge separation. The D1/D2 (PsbA/PsbD) reaction center heterodimer binds P680, the primary electron donor of PSII as well as several subsequent electron acceptors. This chain is Photosystem II protein D1 2, found in Synechococcus elongatus (strain ATCC 33912 / PCC 7942 / FACHB-805) (Anacystis nidulans R2).